A 92-amino-acid polypeptide reads, in one-letter code: MSELEKAMVALIDVFHQYSGREGDKHKLKKSELKELINNELSHFLEEIKEQEVVDKVMETLDEDGDGECDFQEFMAFVAMVTTACHEFFEHE.

Position 2 is an N-acetylserine (Ser-2). 2 consecutive EF-hand domains span residues 13–48 (DVFHQYSGREGDKHKLKKSELKELINNELSHFLEEI) and 49–84 (KEQEVVDKVMETLDEDGDGECDFQEFMAFVAMVTTA). His-16 contributes to the Zn(2+) binding site. Residues Ser-19, Glu-22, and Asp-24 each contribute to the Ca(2+) site. His-26 provides a ligand contact to Zn(2+). Ca(2+) contacts are provided by Asp-62, Asp-64, Asp-66, Glu-68, and Glu-73. His-86 and His-91 together coordinate Zn(2+).

Belongs to the S-100 family. Dimer of either two alpha chains, or two beta chains, or one alpha and one beta chain. The S100B dimer binds two molecules of STK38. Interacts with CACYBP in a calcium-dependent manner. Interacts with ATAD3A; this interaction probably occurs in the cytosol prior to ATAD3A mitochondrial targeting. Interacts with S100A6. The S100B dimer interacts with two molecules of CAPZA1. Interacts with AGER. Interacts with PPP5C (via TPR repeats); the interaction is calcium-dependent and modulates PPP5C activity. Interacts with TPPP; this interaction inhibits TPPP dimerization. Interacts with isoform CLSTN3beta of CLSTN3; interaction promotes secretion.

It localises to the cytoplasm. Its subcellular location is the nucleus. The protein localises to the secreted. Its function is as follows. Small zinc- and- and calcium-binding protein that is highly expressed in astrocytes and constitutes one of the most abundant soluble proteins in brain. Weakly binds calcium but binds zinc very tightly-distinct binding sites with different affinities exist for both ions on each monomer. Physiological concentrations of potassium ion antagonize the binding of both divalent cations, especially affecting high-affinity calcium-binding sites. Acts as a neurotrophic factor that promotes astrocytosis and axonal proliferation. Involved in innervation of thermogenic adipose tissue by acting as an adipocyte-derived neurotrophic factor that promotes sympathetic innervation of adipose tissue. Binds to and initiates the activation of STK38 by releasing autoinhibitory intramolecular interactions within the kinase. Interaction with AGER after myocardial infarction may play a role in myocyte apoptosis by activating ERK1/2 and p53/TP53 signaling. Could assist ATAD3A cytoplasmic processing, preventing aggregation and favoring mitochondrial localization. May mediate calcium-dependent regulation on many physiological processes by interacting with other proteins, such as TPR-containing proteins, and modulating their activity. This Mus musculus (Mouse) protein is Protein S100-B.